Here is a 638-residue protein sequence, read N- to C-terminus: Phosphomethylpyrimidine synthase (638 aa).

Substrate is bound by residues Asn-236, Met-265, Tyr-294, His-330, 350–352, 391–394, and Glu-430; these read SRG and DGLR. His-434 provides a ligand contact to Zn(2+). Substrate is bound at residue Tyr-457. His-498 provides a ligand contact to Zn(2+). Positions 578, 581, and 586 each coordinate [4Fe-4S] cluster.

Belongs to the ThiC family. Homodimer. [4Fe-4S] cluster serves as cofactor.

It carries out the reaction 5-amino-1-(5-phospho-beta-D-ribosyl)imidazole + S-adenosyl-L-methionine = 4-amino-2-methyl-5-(phosphooxymethyl)pyrimidine + CO + 5'-deoxyadenosine + formate + L-methionine + 3 H(+). The protein operates within cofactor biosynthesis; thiamine diphosphate biosynthesis. Its function is as follows. Catalyzes the synthesis of the hydroxymethylpyrimidine phosphate (HMP-P) moiety of thiamine from aminoimidazole ribotide (AIR) in a radical S-adenosyl-L-methionine (SAM)-dependent reaction. The protein is Phosphomethylpyrimidine synthase of Polaromonas sp. (strain JS666 / ATCC BAA-500).